Consider the following 270-residue polypeptide: Eukaryotic translation initiation factor 2 subunit beta (270 aa).

The disordered stretch occupies residues Met1 to Glu38.

The protein belongs to the eIF-2-beta/eIF-5 family. In terms of assembly, eukaryotic translation initiation factor 2 eIF2 is a heterotrimeric complex composed of an alpha, a beta and a gamma subunit.

It localises to the cytoplasm. Its subcellular location is the cytosol. Its function is as follows. Component of the eIF2 complex that functions in the early steps of protein synthesis by forming a ternary complex with GTP and initiator tRNA. This complex binds to a 40S ribosomal subunit, followed by mRNA binding to form a 43S pre-initiation complex (43S PIC). Junction of the 60S ribosomal subunit to form the 80S initiation complex is preceded by hydrolysis of the GTP bound to eIF2 and release of an eIF2-GDP binary complex. In order for eIF2 to recycle and catalyze another round of initiation, the GDP bound to eIF2 must exchange with GTP by way of a reaction catalyzed by eIF2B. In Triticum aestivum (Wheat), this protein is Eukaryotic translation initiation factor 2 subunit beta.